Here is a 298-residue protein sequence, read N- to C-terminus: Protoheme IX farnesyltransferase (298 aa).

9 helical membrane passes run 26-46 (VVSL…PGVV), 52-72 (IFAT…NCLV), 99-119 (FVFL…LVNP), 120-140 (LTMW…TVIL), 148-168 (IVIG…AVTG), 174-194 (ALLL…ALAL), 219-239 (LHVL…YATQ), 241-261 (SGLI…YYAV), and 276-296 (FRYS…DHYI).

This sequence belongs to the UbiA prenyltransferase family. Protoheme IX farnesyltransferase subfamily.

The protein resides in the cell inner membrane. It catalyses the reaction heme b + (2E,6E)-farnesyl diphosphate + H2O = Fe(II)-heme o + diphosphate. It functions in the pathway porphyrin-containing compound metabolism; heme O biosynthesis; heme O from protoheme: step 1/1. In terms of biological role, converts heme B (protoheme IX) to heme O by substitution of the vinyl group on carbon 2 of heme B porphyrin ring with a hydroxyethyl farnesyl side group. In Nitrosospira multiformis (strain ATCC 25196 / NCIMB 11849 / C 71), this protein is Protoheme IX farnesyltransferase.